The following is a 202-amino-acid chain: Orotate phosphoribosyltransferase (202 aa).

Residue 113 to 121 (EDIITTGGS) coordinates 5-phospho-alpha-D-ribose 1-diphosphate. Positions 117 and 145 each coordinate orotate.

The protein belongs to the purine/pyrimidine phosphoribosyltransferase family. PyrE subfamily. In terms of assembly, homodimer. The cofactor is Mg(2+).

The enzyme catalyses orotidine 5'-phosphate + diphosphate = orotate + 5-phospho-alpha-D-ribose 1-diphosphate. It participates in pyrimidine metabolism; UMP biosynthesis via de novo pathway; UMP from orotate: step 1/2. Its function is as follows. Catalyzes the transfer of a ribosyl phosphate group from 5-phosphoribose 1-diphosphate to orotate, leading to the formation of orotidine monophosphate (OMP). The chain is Orotate phosphoribosyltransferase from Sulfurimonas denitrificans (strain ATCC 33889 / DSM 1251) (Thiomicrospira denitrificans (strain ATCC 33889 / DSM 1251)).